A 225-amino-acid chain; its full sequence is Reticulon-like protein B9 (225 aa).

The Reticulon domain occupies 39 to 224 (VADILLWREP…PRGTVKNKKF (186 aa)). A run of 3 helical transmembrane segments spans residues 50–70 (IAAT…VVEY), 72–92 (FITL…IWST), and 152–172 (YIVS…IGFV).

The protein resides in the endoplasmic reticulum membrane. This chain is Reticulon-like protein B9 (RTNLB9), found in Arabidopsis thaliana (Mouse-ear cress).